A 43-amino-acid chain; its full sequence is Protein PsbN (43 aa).

Residues 7–27 (LIVAIAAVTICITAFAIYTAF) form a helical membrane-spanning segment.

This sequence belongs to the PsbN family.

The protein localises to the cellular thylakoid membrane. Its function is as follows. May play a role in photosystem I and II biogenesis. The chain is Protein PsbN from Synechococcus sp. (strain JA-2-3B'a(2-13)) (Cyanobacteria bacterium Yellowstone B-Prime).